Consider the following 367-residue polypeptide: Glutamate 5-kinase (367 aa).

K8 lines the ATP pocket. Residues S49, D136, and N148 each coordinate substrate. ATP contacts are provided by residues 168–169 (TD) and 210–216 (TGGMATK). Residues 275-353 (TGKLYLDRGA…EEIPTILGYS (79 aa)) form the PUA domain.

Belongs to the glutamate 5-kinase family.

It localises to the cytoplasm. The enzyme catalyses L-glutamate + ATP = L-glutamyl 5-phosphate + ADP. It participates in amino-acid biosynthesis; L-proline biosynthesis; L-glutamate 5-semialdehyde from L-glutamate: step 1/2. Catalyzes the transfer of a phosphate group to glutamate to form L-glutamate 5-phosphate. The protein is Glutamate 5-kinase of Cyanothece sp. (strain PCC 7425 / ATCC 29141).